Reading from the N-terminus, the 205-residue chain is Polyamine-modulated factor 1 (205 aa).

The tract at residues 1–28 (MAEASSVNVGSGCAEKGPEELSQEPARP) is disordered. Residues 140–190 (YLLQQRDALQRRVQRQEAENRQLADAVLAGRRQLEELQLQAQARQQAWQAL) are a coiled coil.

Component of the MIS12 complex composed of MIS12, DSN1, NSL1 and PMF1. Interacts with COPS7A. Interacts via its coiled-coil domain with the leucine-zipper domain of NFE2L2. The interaction with NFE2L2 is required for the transcriptional regulation of SSAT.

It is found in the nucleus. The protein resides in the chromosome. Its subcellular location is the centromere. It localises to the kinetochore. Functionally, part of the MIS12 complex which is required for normal chromosome alignment and segregation and kinetochore formation during mitosis. May act as a cotranscription partner of NFE2L2 involved in regulation of polyamine-induced transcription of SSAT. The protein is Polyamine-modulated factor 1 (PMF1) of Bos taurus (Bovine).